The following is a 103-amino-acid chain: uncharacterized protein (103 aa).

The region spanning 10–63 (FPECDHLKQIYDKCFTEFFQKFITPNYRHQYAVNPCERLHDVYKRCVEERLATQ) is the CHCH domain. 2 short sequence motifs (cx9C motif) span residues 13-23 (CDHLKQIYDKC) and 45-55 (CERLHDVYKRC). Intrachain disulfides connect Cys13–Cys55 and Cys23–Cys45. Residues 80–90 (TDDDKLKDRQN) show a composition bias toward basic and acidic residues. The disordered stretch occupies residues 80–103 (TDDDKLKDRQNNQKTNSENKCSSS). The span at 91–103 (NQKTNSENKCSSS) shows a compositional bias: polar residues.

The protein belongs to the TRIAP1/MDM35 family.

This is an uncharacterized protein from Caenorhabditis elegans.